The sequence spans 258 residues: Ubiquinone/menaquinone biosynthesis C-methyltransferase UbiE (258 aa).

S-adenosyl-L-methionine contacts are provided by residues threonine 81, aspartate 102, and 130–131 (NA).

The protein belongs to the class I-like SAM-binding methyltransferase superfamily. MenG/UbiE family.

It catalyses the reaction a 2-demethylmenaquinol + S-adenosyl-L-methionine = a menaquinol + S-adenosyl-L-homocysteine + H(+). The catalysed reaction is a 2-methoxy-6-(all-trans-polyprenyl)benzene-1,4-diol + S-adenosyl-L-methionine = a 5-methoxy-2-methyl-3-(all-trans-polyprenyl)benzene-1,4-diol + S-adenosyl-L-homocysteine + H(+). It participates in quinol/quinone metabolism; menaquinone biosynthesis; menaquinol from 1,4-dihydroxy-2-naphthoate: step 2/2. It functions in the pathway cofactor biosynthesis; ubiquinone biosynthesis. In terms of biological role, methyltransferase required for the conversion of demethylmenaquinol (DMKH2) to menaquinol (MKH2) and the conversion of 2-polyprenyl-6-methoxy-1,4-benzoquinol (DDMQH2) to 2-polyprenyl-3-methyl-6-methoxy-1,4-benzoquinol (DMQH2). The sequence is that of Ubiquinone/menaquinone biosynthesis C-methyltransferase UbiE from Allorhizobium ampelinum (strain ATCC BAA-846 / DSM 112012 / S4) (Agrobacterium vitis (strain S4)).